Here is a 286-residue protein sequence, read N- to C-terminus: NADPH-dependent 7-cyano-7-deazaguanine reductase (286 aa).

Residue isoleucine 92 to serine 94 coordinates substrate. Serine 94–lysine 95 is an NADPH binding site. Cysteine 194 serves as the catalytic Thioimide intermediate. The active-site Proton donor is the aspartate 201. Histidine 233–glutamate 234 contributes to the substrate binding site. Arginine 262–glycine 263 serves as a coordination point for NADPH.

Belongs to the GTP cyclohydrolase I family. QueF type 2 subfamily. As to quaternary structure, homodimer.

The protein localises to the cytoplasm. It carries out the reaction 7-aminomethyl-7-carbaguanine + 2 NADP(+) = 7-cyano-7-deazaguanine + 2 NADPH + 3 H(+). The protein operates within tRNA modification; tRNA-queuosine biosynthesis. In terms of biological role, catalyzes the NADPH-dependent reduction of 7-cyano-7-deazaguanine (preQ0) to 7-aminomethyl-7-deazaguanine (preQ1). The chain is NADPH-dependent 7-cyano-7-deazaguanine reductase from Shewanella oneidensis (strain ATCC 700550 / JCM 31522 / CIP 106686 / LMG 19005 / NCIMB 14063 / MR-1).